A 142-amino-acid polypeptide reads, in one-letter code: MPPKTRGAVRKPRRKDKKNIALGQAHIKSTFNNTIVSITDPNGAVSITDPNGAVISWASAGEVGFKGSRKSTPFAAQMAAEAAAKRAQEHGLRKVDVFVKGPGSGRETAIRSLQAAGLEVGSIQDVTPSAHNGCRPPKRRRV.

Residues 1–21 (MPPKTRGAVRKPRRKDKKNIA) are disordered. The segment covering 7-17 (GAVRKPRRKDK) has biased composition (basic residues).

The protein belongs to the universal ribosomal protein uS11 family. Part of the 30S ribosomal subunit. Interacts with proteins S7 and S18. Binds to IF-3.

In terms of biological role, located on the platform of the 30S subunit, it bridges several disparate RNA helices of the 16S rRNA. Forms part of the Shine-Dalgarno cleft in the 70S ribosome. The polypeptide is Small ribosomal subunit protein uS11 (Paenarthrobacter aurescens (strain TC1)).